Here is a 167-residue protein sequence, read N- to C-terminus: Small heat shock protein C1 (167 aa).

A sHSP domain is found at S59–D167.

This sequence belongs to the small heat shock protein (HSP20) family.

The sequence is that of Small heat shock protein C1 (hspC1) from Rickettsia conorii (strain ATCC VR-613 / Malish 7).